The primary structure comprises 331 residues: DNA polymerase III subunit delta (331 aa).

This sequence belongs to the DNA polymerase HolA subunit family. In terms of assembly, DNA polymerase III contains a core (composed of alpha, epsilon and theta chains) that associates with a tau subunit. This core dimerizes to form the POLIII' complex. PolIII' associates with the gamma complex (composed of gamma, delta, delta', psi and chi chains) and with the beta chain to form the complete DNA polymerase III complex.

It carries out the reaction DNA(n) + a 2'-deoxyribonucleoside 5'-triphosphate = DNA(n+1) + diphosphate. Functionally, DNA polymerase III is a complex, multichain enzyme responsible for most of the replicative synthesis in bacteria. This DNA polymerase also exhibits 3' to 5' exonuclease activity. The delta subunit seems to interact with the gamma subunit to transfer the beta subunit on the DNA. This Buchnera aphidicola subsp. Acyrthosiphon pisum (strain APS) (Acyrthosiphon pisum symbiotic bacterium) protein is DNA polymerase III subunit delta (holA).